The chain runs to 225 residues: Recoverin family protein DDB_G0274781 (225 aa).

The span at 1-13 (MGNKQGKSPNNSK) shows a compositional bias: low complexity. The tract at residues 1 to 20 (MGNKQGKSPNNSKGGKKYKI) is disordered. Residue Gly2 is the site of N-myristoyl glycine attachment. EF-hand domains follow at residues 78–113 (DNSP…LCKG), 114–149 (TAEE…AWIS), and 174–209 (MAQI…HPKI). Positions 91, 93, 95, 97, 102, 127, 129, 131, 133, 138, 187, 189, 191, 193, and 198 each coordinate Ca(2+).

Belongs to the recoverin family.

The sequence is that of Recoverin family protein DDB_G0274781 from Dictyostelium discoideum (Social amoeba).